The primary structure comprises 237 residues: Flagellar L-ring protein (237 aa).

The first 24 residues, Met-1–Gly-24, serve as a signal peptide directing secretion. A lipid anchor (N-palmitoyl cysteine) is attached at Cys-25. Cys-25 is lipidated: S-diacylglycerol cysteine.

This sequence belongs to the FlgH family. The basal body constitutes a major portion of the flagellar organelle and consists of four rings (L,P,S, and M) mounted on a central rod.

Its subcellular location is the cell outer membrane. The protein localises to the bacterial flagellum basal body. Assembles around the rod to form the L-ring and probably protects the motor/basal body from shearing forces during rotation. The polypeptide is Flagellar L-ring protein (Pseudomonas syringae pv. syringae (strain B728a)).